A 265-amino-acid chain; its full sequence is MAEEGAQKATGKIKSVVLILSGKGGVGKSTVASQIALELANGGNKVGILDVDLCGPSIPRVLGLEDKDVHQCADGWIPVYADKNEKLAVMSIGFLLRNSKDAVVWRGPKKNAMIKQFLSDVVWGDLDYLIIDTPPGTSDEHITVAENVRGLNLTGAVMVTTPQAVALGDVRREITFCKKVGIPIVGIVENMSGYTCPNCSECTNIFSKGGGEALAQLTQVPFLGCLPLDPKLTMSIEDGKSFTELYSESPTALAIREIIRPLITS.

22–29 contributes to the ATP binding site; the sequence is GKGGVGKS. [4Fe-4S] cluster contacts are provided by cysteine 196 and cysteine 199.

The protein belongs to the Mrp/NBP35 ATP-binding proteins family. NUBP2/CFD1 subfamily. Heterotetramer of 2 NUBP1 and 2 NUBP2 chains. [4Fe-4S] cluster is required as a cofactor.

The protein localises to the cytoplasm. In terms of biological role, component of the cytosolic iron-sulfur (Fe/S) protein assembly (CIA) machinery. Required for maturation of extramitochondrial Fe-S proteins. The NUBP1-NUBP2 heterotetramer forms a Fe-S scaffold complex, mediating the de novo assembly of an Fe-S cluster and its transfer to target apoproteins. This Trichoplax adhaerens (Trichoplax reptans) protein is Cytosolic Fe-S cluster assembly factor NUBP2 homolog.